We begin with the raw amino-acid sequence, 255 residues long: Formate hydrogenlyase subunit 7 (255 aa).

Positions 45, 51, 115, and 145 each coordinate [4Fe-4S] cluster.

This sequence belongs to the complex I 20 kDa subunit family. In terms of assembly, FHL comprises of a formate dehydrogenase, unidentified electron carriers and a hydrogenase (isoenzyme 3). In this non-energy conserving pathway molecular hydrogen and carbodioxide from formate are released. [4Fe-4S] cluster is required as a cofactor.

This chain is Formate hydrogenlyase subunit 7 (hycG), found in Escherichia coli (strain K12).